The sequence spans 166 residues: Endoribonuclease YbeY (166 aa).

Zn(2+)-binding residues include H129, H133, and H139.

The protein belongs to the endoribonuclease YbeY family. The cofactor is Zn(2+).

The protein resides in the cytoplasm. Its function is as follows. Single strand-specific metallo-endoribonuclease involved in late-stage 70S ribosome quality control and in maturation of the 3' terminus of the 16S rRNA. This is Endoribonuclease YbeY from Heliobacterium modesticaldum (strain ATCC 51547 / Ice1).